The sequence spans 164 residues: Deoxyuridine 5'-triphosphate nucleotidohydrolase (164 aa).

Substrate contacts are provided by residues 66-68 (RSG), N79, 83-85 (TVD), and K93.

The protein belongs to the dUTPase family. It depends on Mg(2+) as a cofactor.

It carries out the reaction dUTP + H2O = dUMP + diphosphate + H(+). It participates in pyrimidine metabolism; dUMP biosynthesis; dUMP from dCTP (dUTP route): step 2/2. Its function is as follows. This enzyme is involved in nucleotide metabolism: it produces dUMP, the immediate precursor of thymidine nucleotides and it decreases the intracellular concentration of dUTP so that uracil cannot be incorporated into DNA. The sequence is that of Deoxyuridine 5'-triphosphate nucleotidohydrolase from Rhodococcus erythropolis (strain PR4 / NBRC 100887).